The chain runs to 434 residues: MEEVSPAIAGPFRPFSETQMDFTGIRLGKGYCNNQYSNQDSENGDLMVSLPETSSCSVSGSHGSESRKVLISRINSPNLNMKESAAADIVVVDISAGDEINGSDITSEKKMISRTESRSLFEFKSVPLYGFTSICGRRPEMEDAVSTIPRFLQSSSGSMLDGRFDPQSAAHFFGVYDGHGGSQVANYCRERMHLALAEEIAKEKPMLCDGDTWLEKWKKALFNSFLRVDSEIESVAPETVGSTSVVAVVFPSHIFVANCGDSRAVLCRGKTALPLSVDHKPDREDEAARIEAAGGKVIQWNGARVFGVLAMSRSIGDRYLKPSIIPDPEVTAVKRVKEDDCLILASDGVWDVMTDEEACEMARKRILLWHKKNAVAGDASLLADERRKEGKDPAAMSAAEYLSKLAIQRGSKDNISVVVVDLKPRRKLKSKPLN.

The region spanning leucine 128 to leucine 422 is the PPM-type phosphatase domain. Mg(2+) is bound by residues aspartate 177, aspartate 261, serine 262, aspartate 347, and aspartate 413. The short motif at lysine 423 to lysine 427 is the Nuclear localization signal element.

Belongs to the PP2C family. As to quaternary structure, interacts with SPK1, ATHB-6, CIPK15/PKS3, GPX3, SRK2E/OST1, SRK2D, SRK2I, SCAR1, SCAR2, SCAR3 and SCARL. Binds to the PA released by the phospholipase D alpha 1 (PLDALPHA1) in response to ABA during the stomatal closure regulation. Interacts with ABA-bounded PYR1, PYL1, PYL2, PYL3, PYL4, PYL5, PYL6, PYL7, PYL8, PYL9, PYL10, and with free PYL2, PYL3, PYL4 and PYL13. Binds to RPL12B, CPK21 and CPK23. Binds to MAPKKK18. Interacts with KIN10. Interacts with phosphorylated PYL8/RCAR3. Mg(2+) serves as cofactor. Mn(2+) is required as a cofactor. In terms of tissue distribution, expressed in seeds and seedlings. In roots, confined to lateral root caps and columella cells.

The protein localises to the nucleus. The protein resides in the cytoplasm. It is found in the cell membrane. It catalyses the reaction O-phospho-L-seryl-[protein] + H2O = L-seryl-[protein] + phosphate. It carries out the reaction O-phospho-L-threonyl-[protein] + H2O = L-threonyl-[protein] + phosphate. Its activity is regulated as follows. Phosphatase activity repressed by oxidized GPX3 and phosphatidic acid (PA). PA is produced by PLD alpha 1 in response to ABA. Repressed by PYR/PYL/RCAR ABA receptors in an ABA-dependent manner. In terms of biological role, key component and repressor of the abscisic acid (ABA) signaling pathway that regulates numerous ABA responses, such as stomatal closure, osmotic water permeability of the plasma membrane (Pos), drought-induced resistance and rhizogenesis, response to glucose, high light stress, seed germination and inhibition of vegetative growth. During the stomatal closure regulation, modulates the inward calcium-channel permeability as well as the actin reorganization in guard cells in response to ABA. Involved in the resistance to the bacterial pathogen Pseudomonas syringae pv. tomato. Controls negatively fibrillin expression that is involved in mediating ABA-induced photoprotection. May be involved in ABA content regulation. Plays a role in the Pro accumulation in response to reduced water availability (low water potential). Required for the ABA negative regulation of the ethylene-induced hyponastic growth. Involved in acquired thermotolerance of root growth and seedling survival. Activates/represses SRK2E/OST1 in response to ABA-dependent stimuli, especially in stomata closure regulation involving SLAC1. Represses MAPKKK18 activity and promotes MAPKKK18 degradation by the proteasome pathway upon abscisic acid (ABA) treatment. Represses KIN10 activity by the specific dephosphorylation of its T-loop Thr-198, leading to a poststress inactivation of SnRK1 signaling. Restricts MAPKKK20 activity by dephosphorylation. The protein is Protein phosphatase 2C 56 of Arabidopsis thaliana (Mouse-ear cress).